A 233-amino-acid chain; its full sequence is Phosphoribosylformylglycinamidine synthase subunit PurQ (233 aa).

The region spanning Ala3 to Ala233 is the Glutamine amidotransferase type-1 domain. Cys87 acts as the Nucleophile in catalysis. Residues His204 and Glu206 contribute to the active site.

Part of the FGAM synthase complex composed of 1 PurL, 1 PurQ and 2 PurS subunits.

The protein resides in the cytoplasm. The catalysed reaction is N(2)-formyl-N(1)-(5-phospho-beta-D-ribosyl)glycinamide + L-glutamine + ATP + H2O = 2-formamido-N(1)-(5-O-phospho-beta-D-ribosyl)acetamidine + L-glutamate + ADP + phosphate + H(+). It catalyses the reaction L-glutamine + H2O = L-glutamate + NH4(+). It participates in purine metabolism; IMP biosynthesis via de novo pathway; 5-amino-1-(5-phospho-D-ribosyl)imidazole from N(2)-formyl-N(1)-(5-phospho-D-ribosyl)glycinamide: step 1/2. Functionally, part of the phosphoribosylformylglycinamidine synthase complex involved in the purines biosynthetic pathway. Catalyzes the ATP-dependent conversion of formylglycinamide ribonucleotide (FGAR) and glutamine to yield formylglycinamidine ribonucleotide (FGAM) and glutamate. The FGAM synthase complex is composed of three subunits. PurQ produces an ammonia molecule by converting glutamine to glutamate. PurL transfers the ammonia molecule to FGAR to form FGAM in an ATP-dependent manner. PurS interacts with PurQ and PurL and is thought to assist in the transfer of the ammonia molecule from PurQ to PurL. The protein is Phosphoribosylformylglycinamidine synthase subunit PurQ of Bradyrhizobium diazoefficiens (strain JCM 10833 / BCRC 13528 / IAM 13628 / NBRC 14792 / USDA 110).